The chain runs to 90 residues: Serine-rich and transmembrane domain-containing 2 (90 aa).

A glycan (N-linked (GlcNAc...) asparagine) is linked at Asn11. A helical membrane pass occupies residues 38-58 (YVGLFLSLLAILLILLFTMLL). The segment at 69–90 (SDSTESVPQFTDVEMQSRIPTP) is disordered.

The protein localises to the membrane. This Homo sapiens (Human) protein is Serine-rich and transmembrane domain-containing 2.